Consider the following 348-residue polypeptide: Protein RecA (348 aa).

65–72 contacts ATP; that stretch reads GPESSGKT.

It belongs to the RecA family.

It is found in the cytoplasm. Functionally, can catalyze the hydrolysis of ATP in the presence of single-stranded DNA, the ATP-dependent uptake of single-stranded DNA by duplex DNA, and the ATP-dependent hybridization of homologous single-stranded DNAs. It interacts with LexA causing its activation and leading to its autocatalytic cleavage. In Enterococcus gallinarum, this protein is Protein RecA.